Here is a 279-residue protein sequence, read N- to C-terminus: UPF0173 metal-dependent hydrolase MXAN_1394 (279 aa).

Belongs to the UPF0173 family.

The sequence is that of UPF0173 metal-dependent hydrolase MXAN_1394 from Myxococcus xanthus (strain DK1622).